The following is a 348-amino-acid chain: Ion-translocating oxidoreductase complex subunit D (348 aa).

Helical transmembrane passes span 23–43, 44–64, 72–91, and 126–146; these read WVLA…GYGT, LIQL…IMLL, ALRD…AIPP, and IAYV…MAPI. T187 is modified (FMN phosphoryl threonine). 5 helical membrane-spanning segments follow: residues 214–234, 243–263, 266–286, 300–320, and 321–341; these read FAGI…LILL, IPMA…LFAP, TASP…FFIA, LIYG…GGFP, and DGVA…DYYT.

It belongs to the NqrB/RnfD family. In terms of assembly, the complex is composed of six subunits: RnfA, RnfB, RnfC, RnfD, RnfE and RnfG. FMN is required as a cofactor.

The protein localises to the cell inner membrane. Functionally, part of a membrane-bound complex that couples electron transfer with translocation of ions across the membrane. The protein is Ion-translocating oxidoreductase complex subunit D of Vibrio cholerae serotype O1 (strain ATCC 39315 / El Tor Inaba N16961).